Consider the following 83-residue polypeptide: Large ribosomal subunit protein bL31B (83 aa).

It belongs to the bacterial ribosomal protein bL31 family. Type B subfamily. In terms of assembly, part of the 50S ribosomal subunit.

The chain is Large ribosomal subunit protein bL31B from Lactobacillus gasseri (strain ATCC 33323 / DSM 20243 / BCRC 14619 / CIP 102991 / JCM 1131 / KCTC 3163 / NCIMB 11718 / NCTC 13722 / AM63).